We begin with the raw amino-acid sequence, 855 residues long: DNA mismatch repair protein MutS (855 aa).

618–625 (GPNMGGKS) lines the ATP pocket.

Belongs to the DNA mismatch repair MutS family.

Its function is as follows. This protein is involved in the repair of mismatches in DNA. It is possible that it carries out the mismatch recognition step. This protein has a weak ATPase activity. In Shewanella loihica (strain ATCC BAA-1088 / PV-4), this protein is DNA mismatch repair protein MutS.